The primary structure comprises 398 residues: Galactose-3-O-sulfotransferase 2 (398 aa).

At 1–10 (MMSMLGGLQR) the chain is on the cytoplasmic side. A helical; Signal-anchor for type II membrane protein membrane pass occupies residues 11 to 31 (YFRVILLLLLALTLLLLAGFL). Topologically, residues 32–398 (HSDLELDTPL…PLKNIPFLGA (367 aa)) are lumenal. Asn79, Asn132, Asn179, Asn287, Asn330, and Asn360 each carry an N-linked (GlcNAc...) asparagine glycan.

Belongs to the galactose-3-O-sulfotransferase family. Ubiquitous. Detected in heart, stomach, colon, liver and spleen, in epithelial cells lining the lower to middle layer of the crypts in colonic mucosa, hepatocytes surrounding the central vein of the liver, extravillous cytotrophoblasts in the basal plate of the septum of the placenta, renal tubules of the kidney, and neuronal cells of the cerebral cortex.

It localises to the golgi apparatus. The protein resides in the golgi stack membrane. Its pathway is protein modification; carbohydrate sulfation. Its activity is regulated as follows. Strongly inhibited by Cu(2+) and Zn(2+). In terms of biological role, transfers a sulfate group to the hydroxyl group at C3 of non-reducing beta-galactosyl residues. Acts both on type 1 (Gal-beta-1,3-GlcNAc) and type 2 (Gal-beta-1,4-GlcNAc) chains with similar efficiency. This chain is Galactose-3-O-sulfotransferase 2 (GAL3ST2), found in Homo sapiens (Human).